The sequence spans 193 residues: RNA pyrophosphohydrolase (193 aa).

Residues 6–149 (GFRPNVGIIL…KRDVYQRALQ (144 aa)) enclose the Nudix hydrolase domain. The short motif at 38–59 (GGIKFGETPEQAMFRELEEEVG) is the Nudix box element. Residues 174 to 193 (THSARKTDEPSTEQTKPNNE) form a disordered region.

The protein belongs to the Nudix hydrolase family. RppH subfamily. The cofactor is a divalent metal cation.

Functionally, accelerates the degradation of transcripts by removing pyrophosphate from the 5'-end of triphosphorylated RNA, leading to a more labile monophosphorylated state that can stimulate subsequent ribonuclease cleavage. The chain is RNA pyrophosphohydrolase from Herminiimonas arsenicoxydans.